The primary structure comprises 127 residues: Thioredoxin (127 aa).

The region spanning 2-115 (SDGVKHINSA…LRAAAEKMGR (114 aa)) is the Thioredoxin domain. Active-site nucleophile residues include C33 and C36. A disulfide bridge links C33 with C36.

This sequence belongs to the thioredoxin family.

Participates in various redox reactions through the reversible oxidation of its active center dithiol to a disulfide and catalyzes dithiol-disulfide exchange reactions. The polypeptide is Thioredoxin (trx) (Neurospora crassa (strain ATCC 24698 / 74-OR23-1A / CBS 708.71 / DSM 1257 / FGSC 987)).